We begin with the raw amino-acid sequence, 572 residues long: Phospholipase B-like protein B (572 aa).

The N-terminal stretch at 1 to 28 (MNKLKSNFILNIVILFTILIFNINFINC) is a signal peptide. Residues Asn73, Asn138, Asn219, Asn427, Asn544, and Asn564 are each glycosylated (N-linked (GlcNAc...) asparagine).

The protein belongs to the phospholipase B-like family.

The protein localises to the secreted. Functionally, probable phospholipase. The sequence is that of Phospholipase B-like protein B (plbB) from Dictyostelium discoideum (Social amoeba).